Reading from the N-terminus, the 439-residue chain is Diaminopimelate decarboxylase (439 aa).

Residue lysine 66 is modified to N6-(pyridoxal phosphate)lysine. Residues glycine 248 and 290–293 each bind pyridoxal 5'-phosphate; that span reads EPGR. Substrate contacts are provided by arginine 293, arginine 330, and tyrosine 334. The active-site Proton donor is the cysteine 361. 2 residues coordinate substrate: glutamate 362 and tyrosine 390. Tyrosine 390 provides a ligand contact to pyridoxal 5'-phosphate.

Belongs to the Orn/Lys/Arg decarboxylase class-II family. LysA subfamily. As to quaternary structure, homodimer. Pyridoxal 5'-phosphate serves as cofactor.

It carries out the reaction meso-2,6-diaminopimelate + H(+) = L-lysine + CO2. It functions in the pathway amino-acid biosynthesis; L-lysine biosynthesis via DAP pathway; L-lysine from DL-2,6-diaminopimelate: step 1/1. Its function is as follows. Specifically catalyzes the decarboxylation of meso-diaminopimelate (meso-DAP) to L-lysine. This chain is Diaminopimelate decarboxylase, found in Bacillus subtilis (strain 168).